Reading from the N-terminus, the 100-residue chain is Small ribosomal subunit protein uS14c (100 aa).

The protein belongs to the universal ribosomal protein uS14 family. In terms of assembly, part of the 30S ribosomal subunit.

Its subcellular location is the plastid. It localises to the chloroplast. Functionally, binds 16S rRNA, required for the assembly of 30S particles. The protein is Small ribosomal subunit protein uS14c of Calycanthus floridus var. glaucus (Eastern sweetshrub).